Consider the following 293-residue polypeptide: Homoserine kinase (293 aa).

An ATP-binding site is contributed by 83 to 93 (RPKSGLGSSGA).

Belongs to the GHMP kinase family. Homoserine kinase subfamily.

The protein localises to the cytoplasm. The enzyme catalyses L-homoserine + ATP = O-phospho-L-homoserine + ADP + H(+). Its pathway is amino-acid biosynthesis; L-threonine biosynthesis; L-threonine from L-aspartate: step 4/5. Its function is as follows. Catalyzes the ATP-dependent phosphorylation of L-homoserine to L-homoserine phosphate. The protein is Homoserine kinase of Pyrococcus horikoshii (strain ATCC 700860 / DSM 12428 / JCM 9974 / NBRC 100139 / OT-3).